We begin with the raw amino-acid sequence, 491 residues long: Subtilase-type proteinase RRT12 (491 aa).

The first 17 residues, 1 to 17 (MKPQCILISLLVNLAYA), serve as a signal peptide directing secretion. 4 N-linked (GlcNAc...) asparagine glycosylation sites follow: Asn-38, Asn-64, Asn-106, and Asn-121. Residues 142-442 (PFDVGDKDRY…FPRLNIEAIA (301 aa)) form the Peptidase S8 domain. Active-site charge relay system residues include Asp-174 and His-205. Asn-268 and Asn-356 each carry an N-linked (GlcNAc...) asparagine glycan. The active-site Charge relay system is Ser-365. An N-linked (GlcNAc...) asparagine glycan is attached at Asn-449.

It belongs to the peptidase S8 family. In terms of processing, N-glycosylated.

The protein localises to the spore wall. In terms of biological role, subtilisin-related protease involved in the formation of a protective dityrosine layer required for spore wall assembly. Identified in a screen for mutants with increased levels of rDNA transcription. The chain is Subtilase-type proteinase RRT12 (RRT12) from Saccharomyces cerevisiae (strain ATCC 204508 / S288c) (Baker's yeast).